Here is a 508-residue protein sequence, read N- to C-terminus: Photosystem II CP47 reaction center protein (508 aa).

Helical transmembrane passes span 21–36 (SVHI…WAGS), 101–115 (IVFS…IWHW), 140–156 (GIHL…FGAF), 203–218 (IAAG…FHLS), 237–252 (VLSS…AFVV), and 457–472 (SFAL…HGAR).

This sequence belongs to the PsbB/PsbC family. PsbB subfamily. PSII is composed of 1 copy each of membrane proteins PsbA, PsbB, PsbC, PsbD, PsbE, PsbF, PsbH, PsbI, PsbJ, PsbK, PsbL, PsbM, PsbT, PsbX, PsbY, PsbZ, Psb30/Ycf12, at least 3 peripheral proteins of the oxygen-evolving complex and a large number of cofactors. It forms dimeric complexes. Binds multiple chlorophylls. PSII binds additional chlorophylls, carotenoids and specific lipids. is required as a cofactor.

Its subcellular location is the plastid. It localises to the chloroplast thylakoid membrane. One of the components of the core complex of photosystem II (PSII). It binds chlorophyll and helps catalyze the primary light-induced photochemical processes of PSII. PSII is a light-driven water:plastoquinone oxidoreductase, using light energy to abstract electrons from H(2)O, generating O(2) and a proton gradient subsequently used for ATP formation. The sequence is that of Photosystem II CP47 reaction center protein from Ipomoea purpurea (Common morning glory).